The primary structure comprises 263 residues: LIM and SH3 domain protein 1 (263 aa).

Met1 carries the N-acetylmethionine modification. The region spanning Pro3–Thr63 is the LIM zinc-binding domain. Lys42 bears the N6-acetyllysine mark. 2 Nebulin repeats span residues Met64–Gly95 and Gly97–Met131. Phosphothreonine is present on Thr68. Lys75 carries the post-translational modification N6-methyllysine. A Phosphoserine modification is found at Ser99. At Thr104 the chain carries Phosphothreonine. Lys112 bears the N6-succinyllysine mark. Residues Ser118 and Ser134 each carry the phosphoserine modification. Residues Tyr122–Lys207 are disordered. Over residues Asp148–Gln162 the composition is skewed to polar residues. Residues Gly204–Ile263 enclose the SH3 domain.

Interacts with F-actin. Interacts with ANKRD54. Interacts with KBTBD10. In terms of processing, phosphorylated. In terms of tissue distribution, expressed in a wide range of tissues (but not the heart or skeletal muscle), the expression is specific for certain actin-rich cell types within these tissues. Expression is prominent in the cortical regions of ion-transporting duct cells in the pancreas, in the salivary parotid gland and in certain F-actin-rich cells in the distal tubule/collecting duct. In primary cultures of gastric fibroblasts, expression is mainly within the tips of lamellipodia and at the leading edges of membrane ruffles.

Its subcellular location is the cytoplasm. It localises to the cell cortex. The protein resides in the cytoskeleton. Plays an important role in the regulation of dynamic actin-based, cytoskeletal activities. Agonist-dependent changes in LASP1 phosphorylation may also serve to regulate actin-associated ion transport activities, not only in the parietal cell but also in certain other F-actin-rich secretory epithelial cell types. The chain is LIM and SH3 domain protein 1 from Rattus norvegicus (Rat).